The following is a 394-amino-acid chain: Enoyl-[acyl-carrier-protein] reductase [NADH] (394 aa).

NAD(+) contacts are provided by residues G48–Y53, Y74–E75, D111–A112, and L139–A140. Residue Y225 participates in substrate binding. Residue Y235 is the Proton donor of the active site. NAD(+)-binding positions include K244 and L273 to T275.

The protein belongs to the TER reductase family. In terms of assembly, monomer.

It catalyses the reaction a 2,3-saturated acyl-[ACP] + NAD(+) = a (2E)-enoyl-[ACP] + NADH + H(+). Its pathway is lipid metabolism; fatty acid biosynthesis. Functionally, involved in the final reduction of the elongation cycle of fatty acid synthesis (FAS II). Catalyzes the reduction of a carbon-carbon double bond in an enoyl moiety that is covalently linked to an acyl carrier protein (ACP). The protein is Enoyl-[acyl-carrier-protein] reductase [NADH] of Opitutus terrae (strain DSM 11246 / JCM 15787 / PB90-1).